A 203-amino-acid polypeptide reads, in one-letter code: Ras-like protein family member 10B (203 aa).

Positions 1 to 203 are small GTPase-like; sequence MVSTYRVAVL…ALRRNRCAIM (203 aa). 11-18 contacts GTP; sequence GARGVGKS. Positions 33 to 42 match the Effector region motif; it reads CVPTTARRLY. GTP is bound by residues 59 to 62 and 128 to 131; these read DFPP and NKRD. A Cysteine methyl ester modification is found at Cys200. Cys200 is lipidated: S-geranylgeranyl cysteine. Positions 201 to 203 are cleaved as a propeptide — removed in mature form; it reads AIM.

Belongs to the small GTPase superfamily. Ras family. In terms of assembly, interacts with CADPS. Expressed at high levels in skeletal muscle and, at much lower levels, in heart, brain and pancreas.

It localises to the cell membrane. It carries out the reaction GTP + H2O = GDP + phosphate + H(+). Its function is as follows. May facilitate the release of atrial natriuretic peptide by cardiomyocytes and hence play a role in the regulation of arterial pressure. This chain is Ras-like protein family member 10B (RASL10B), found in Homo sapiens (Human).